Here is a 199-residue protein sequence, read N- to C-terminus: Phosphoheptose isomerase (199 aa).

The SIS domain occupies 36–198 (MAQCLLNEHK…DRKLIPSSED (163 aa)). 51 to 53 (NGG) contributes to the substrate binding site. Positions 60 and 64 each coordinate Zn(2+). Substrate is bound by residues Glu64, 93–94 (ND), 119–121 (STS), Ser124, and Gln174. Residues Gln174 and His182 each coordinate Zn(2+).

This sequence belongs to the SIS family. GmhA subfamily. In terms of assembly, homotetramer. Zn(2+) serves as cofactor.

Its subcellular location is the cytoplasm. The catalysed reaction is 2 D-sedoheptulose 7-phosphate = D-glycero-alpha-D-manno-heptose 7-phosphate + D-glycero-beta-D-manno-heptose 7-phosphate. It functions in the pathway carbohydrate biosynthesis; D-glycero-D-manno-heptose 7-phosphate biosynthesis; D-glycero-alpha-D-manno-heptose 7-phosphate and D-glycero-beta-D-manno-heptose 7-phosphate from sedoheptulose 7-phosphate: step 1/1. Catalyzes the isomerization of sedoheptulose 7-phosphate in D-glycero-D-manno-heptose 7-phosphate. This chain is Phosphoheptose isomerase, found in Coxiella burnetii (strain CbuK_Q154) (Coxiella burnetii (strain Q154)).